The following is a 377-amino-acid chain: UDP-N-acetylenolpyruvoylglucosamine reductase (377 aa).

Residues 48 to 215 (LGGTPMAAVR…LGITLQLHTD (168 aa)) form the FAD-binding PCMH-type domain. Arg193 is a catalytic residue. Ser268 functions as the Proton donor in the catalytic mechanism. The active site involves Glu369.

Belongs to the MurB family. The cofactor is FAD.

It localises to the cytoplasm. It carries out the reaction UDP-N-acetyl-alpha-D-muramate + NADP(+) = UDP-N-acetyl-3-O-(1-carboxyvinyl)-alpha-D-glucosamine + NADPH + H(+). It participates in cell wall biogenesis; peptidoglycan biosynthesis. In terms of biological role, cell wall formation. The polypeptide is UDP-N-acetylenolpyruvoylglucosamine reductase (Corynebacterium diphtheriae (strain ATCC 700971 / NCTC 13129 / Biotype gravis)).